The primary structure comprises 520 residues: Membrane-bound glycerophospholipid O-acyltransferase 2 (520 aa).

The next 6 helical transmembrane spans lie at 22 to 42 (PIDQ…AIWF), 61 to 81 (TLLG…HFLV), 88 to 108 (CIMI…FALG), 184 to 204 (FMGI…FIEG), 237 to 257 (LLVC…LPVE), and 264 to 284 (FQAT…LLAA). Catalysis depends on residues Asn342 and His373. A run of 3 helical transmembrane segments spans residues 366 to 386 (FILS…FLTG), 416 to 436 (VITW…FVLL), and 444 to 464 (FYSS…LLLP).

It belongs to the membrane-bound acyltransferase family. In terms of tissue distribution, expressed in neutrophils.

The protein resides in the endoplasmic reticulum membrane. The catalysed reaction is a 1-acyl-sn-glycero-3-phosphocholine + an acyl-CoA = a 1,2-diacyl-sn-glycero-3-phosphocholine + CoA. It catalyses the reaction a 1-acyl-sn-glycero-3-phosphoethanolamine + an acyl-CoA = a 1,2-diacyl-sn-glycero-3-phosphoethanolamine + CoA. It carries out the reaction a 1-acyl-sn-glycero-3-phosphate + an acyl-CoA = a 1,2-diacyl-sn-glycero-3-phosphate + CoA. The enzyme catalyses (9Z)-hexadecenoyl-CoA + 1-hexadecanoyl-sn-glycero-3-phosphocholine = 1-hexadecanoyl-2-(9Z-hexadecenoyl)-sn-glycero-3-phosphocholine + CoA. The catalysed reaction is 1-hexadecanoyl-sn-glycero-3-phosphoethanolamine + (9Z)-octadecenoyl-CoA = 1-hexadecanoyl-2-(9Z-octadecenoyl)-sn-glycero-3-phosphoethanolamine + CoA. It catalyses the reaction 1-hexadecanoyl-sn-glycero-3-phosphoethanolamine + (9Z)-hexadecenoyl-CoA = 1-hexadecanoyl-2-(9Z)-hexadecenoyl-sn-glycero-3-phosphoethanolamine + CoA. It carries out the reaction 1-(9Z-octadecenoyl)-sn-glycero-3-phospho-L-serine + hexadecanoyl-CoA = 1-(9Z)-octadecenoyl-2-hexadecanoyl-sn-glycero-3-phosphoserine + CoA. The enzyme catalyses (9Z,12Z)-octadecadienoyl-CoA + 1-hexadecanoyl-sn-glycero-3-phosphocholine = 1-hexadecanoyl-2-(9Z,12Z-octadecadienoyl)-sn-glycero-3-phosphocholine + CoA. The catalysed reaction is 1-hexadecanoyl-sn-glycero-3-phosphocholine + (9Z)-octadecenoyl-CoA = 1-hexadecanoyl-2-(9Z-octadecenoyl)-sn-glycero-3-phosphocholine + CoA. It catalyses the reaction 1-hexadecanoyl-sn-glycero-3-phosphate + (9Z)-hexadecenoyl-CoA = 1-hexadecanoyl-2-[(9Z)-hexadec-9-enoyl]-sn-glycero-3-phosphate + CoA. It carries out the reaction 1-hexadecanoyl-sn-glycero-3-phosphate + (9Z)-octadecenoyl-CoA = 1-hexadecanoyl-2-(9Z-octadecenoyl)-sn-glycero-3-phosphate + CoA. The enzyme catalyses a 1-O-(1Z-alkenyl)-sn-glycero-3-phosphocholine + (9Z)-octadecenoyl-CoA = 1-O-(1Z)-alkenyl-2-(9Z)-octadecenoyl-sn-glycero-3-phosphocholine + CoA. The catalysed reaction is a 1-O-(1Z-alkenyl)-sn-glycero-3-phosphoethanolamine + (9Z)-octadecenoyl-CoA = 1-O-(1Z)-alkenyl-2-(9Z)-octadecenoyl-sn-glycero-3-phosphoethanolamine + CoA. It catalyses the reaction 1-octadecanoyl-sn-glycero-3-phosphoethanolamine + (9Z)-octadecenoyl-CoA = 1-octadecanoyl-2-(9Z-octadecenoyl)-sn-glycero-3-phosphoethanolamine + CoA. It carries out the reaction 1-octadecanoyl-sn-glycero-3-phosphocholine + (9Z)-octadecenoyl-CoA = 1-octadecanoyl-2-(9Z-octadecenoyl)-sn-glycero-3-phosphocholine + CoA. The enzyme catalyses 1-(9Z-octadecenoyl)-sn-glycero-3-phosphoethanolamine + (9Z)-octadecenoyl-CoA = 1,2-di-(9Z-octadecenoyl)-sn-glycero-3-phosphoethanolamine + CoA. It participates in lipid metabolism; phospholipid metabolism. Partially inhibited by thimerosal. In terms of biological role, acyltransferase which catalyzes the transfer of an acyl group from an acyl-CoA to a lysophospholipid leading to the production of a phospholipid and participates in the reacylation step of the phospholipid remodeling pathway also known as the Lands cycle. Catalyzes preferentially the acylation of lysophosphatidylethanolamine (1-acyl-sn-glycero-3-phosphoethanolamine or LPE) and lysophosphatidic acid (LPA) and to a lesser extend lysophosphatidylcholine (LPC) and lysophosphatidylserine (LPS). Prefers oleoyl-CoA as the acyl donor. May be involved in chondrocyte differentiation. This is Membrane-bound glycerophospholipid O-acyltransferase 2 from Homo sapiens (Human).